The chain runs to 419 residues: uncharacterized protein (419 aa).

[4Fe-4S] cluster-binding residues include Cys-38, Cys-44, Cys-47, and Cys-126. Positions 250, 280, 301, and 346 each coordinate S-adenosyl-L-methionine. The active-site Nucleophile is Cys-373.

Belongs to the class I-like SAM-binding methyltransferase superfamily. RNA M5U methyltransferase family.

This is an uncharacterized protein from Prochlorococcus marinus (strain SARG / CCMP1375 / SS120).